A 281-amino-acid chain; its full sequence is Putative phosphatase MPN_264 (281 aa).

Asp8 (nucleophile) is an active-site residue. Asp8 contacts Mg(2+). Residue Leu9 participates in phosphate binding. Residue Asp10 participates in Mg(2+) binding. Phosphate is bound by residues 44–45 and Lys205; that span reads TG. Positions 228 and 229 each coordinate Mg(2+). Phosphate is bound at residue Asn231.

It belongs to the HAD-like hydrolase superfamily. Cof family. The cofactor is Mg(2+).

The sequence is that of Putative phosphatase MPN_264 from Mycoplasma pneumoniae (strain ATCC 29342 / M129 / Subtype 1) (Mycoplasmoides pneumoniae).